A 141-amino-acid chain; its full sequence is Large ribosomal subunit protein uL11 (141 aa).

Belongs to the universal ribosomal protein uL11 family. Part of the ribosomal stalk of the 50S ribosomal subunit. Interacts with L10 and the large rRNA to form the base of the stalk. L10 forms an elongated spine to which L12 dimers bind in a sequential fashion forming a multimeric L10(L12)X complex. Post-translationally, one or more lysine residues are methylated.

Functionally, forms part of the ribosomal stalk which helps the ribosome interact with GTP-bound translation factors. The polypeptide is Large ribosomal subunit protein uL11 (Cyanothece sp. (strain PCC 7425 / ATCC 29141)).